Here is a 420-residue protein sequence, read N- to C-terminus: Gamma-glutamyl phosphate reductase (420 aa).

This sequence belongs to the gamma-glutamyl phosphate reductase family.

Its subcellular location is the cytoplasm. It carries out the reaction L-glutamate 5-semialdehyde + phosphate + NADP(+) = L-glutamyl 5-phosphate + NADPH + H(+). It participates in amino-acid biosynthesis; L-proline biosynthesis; L-glutamate 5-semialdehyde from L-glutamate: step 2/2. Catalyzes the NADPH-dependent reduction of L-glutamate 5-phosphate into L-glutamate 5-semialdehyde and phosphate. The product spontaneously undergoes cyclization to form 1-pyrroline-5-carboxylate. The polypeptide is Gamma-glutamyl phosphate reductase (Streptococcus pneumoniae serotype 4 (strain ATCC BAA-334 / TIGR4)).